A 203-amino-acid chain; its full sequence is MKTFQLMMISFLFVAITTTSGVVSEGNDVVYDGEGDPVKPNVPYYISFMTSDYNMWICRMQYGSTDPNSCPQQPLMVTHPNLAAPTPVMFVLANKSDVVRESAKLKIKFVGPRQCGKSGFWKVVQRNSSEGEVFLNGSKSMSHNDSTFAIHKTNEYYKFTFGDGDYPTTISMTNDYPIYRLLSKRLSGEMEIYFYKNLTTSEG.

Residues 1–21 (MKTFQLMMISFLFVAITTTSG) form the signal peptide. Cysteines 70 and 115 form a disulfide. Asn94, Asn127, Asn136, Asn144, and Asn197 each carry an N-linked (GlcNAc...) asparagine glycan.

This sequence belongs to the protease inhibitor I3 (leguminous Kunitz-type inhibitor) family.

In terms of biological role, exhibits Kunitz trypsin protease inhibitor activity. In Arabidopsis thaliana (Mouse-ear cress), this protein is Kunitz trypsin inhibitor 6.